Reading from the N-terminus, the 372-residue chain is MLDIKQLVKTYDNGHQAVKGVDLSIHQGEFIVLVGPSGCGKSSILRSIAGLESITSGEIHLAGRRVDNEKPANRDIAMVFQNYALYPHMSVYDNLAYGLKNRGVDKQTIAAKIAKVAKTLKIEEYLDRKPAKLSGGQRQRVAMGRAIVRDPQLFLFDEPLSNLDAALRAHMRLEIKKLQRELGVTSVYVTHDQVEAMTLADRIVVVKQGEIEQVGTPAEVYHQPASTFVASFIGSPAMNFLPASIKQGQLHIAGKHCYLPQFDAMSSENITLGIRPEHASLHPLTNAIELKLDIQVVEPLGPNQLVHGKIIGLESEQDFIAVTAEIPLDVHQTLPIWVALEQLHLFDQQGKRFVQSHRSCTQSSKVASTRQQ.

The ABC transporter domain occupies 2 to 233; sequence LDIKQLVKTY…PASTFVASFI (232 aa). Position 35-42 (35-42) interacts with ATP; the sequence is GPSGCGKS.

The protein belongs to the ABC transporter superfamily. sn-glycerol-3-phosphate importer (TC 3.A.1.1.3) family. The complex is composed of two ATP-binding proteins (UgpC), two transmembrane proteins (UgpA and UgpE) and a solute-binding protein (UgpB).

The protein resides in the cell inner membrane. The enzyme catalyses sn-glycerol 3-phosphate(out) + ATP + H2O = sn-glycerol 3-phosphate(in) + ADP + phosphate + H(+). Its function is as follows. Part of the ABC transporter complex UgpBAEC involved in sn-glycerol-3-phosphate (G3P) import. Responsible for energy coupling to the transport system. The protein is sn-glycerol-3-phosphate import ATP-binding protein UgpC of Vibrio cholerae serotype O1 (strain ATCC 39315 / El Tor Inaba N16961).